Consider the following 247-residue polypeptide: Adenosylcobinamide-GDP ribazoletransferase (247 aa).

5 helical membrane passes run 34–54, 59–79, 113–133, 138–158, and 194–214; these read IITF…VFMV, CGVP…TGGF, GGLA…ELAL, ILAS…LLMY, and VLLP…AIFI.

The protein belongs to the CobS family. Mg(2+) is required as a cofactor.

It is found in the cell inner membrane. The enzyme catalyses alpha-ribazole + adenosylcob(III)inamide-GDP = adenosylcob(III)alamin + GMP + H(+). It catalyses the reaction alpha-ribazole 5'-phosphate + adenosylcob(III)inamide-GDP = adenosylcob(III)alamin 5'-phosphate + GMP + H(+). It functions in the pathway cofactor biosynthesis; adenosylcobalamin biosynthesis; adenosylcobalamin from cob(II)yrinate a,c-diamide: step 7/7. Its function is as follows. Joins adenosylcobinamide-GDP and alpha-ribazole to generate adenosylcobalamin (Ado-cobalamin). Also synthesizes adenosylcobalamin 5'-phosphate from adenosylcobinamide-GDP and alpha-ribazole 5'-phosphate. This chain is Adenosylcobinamide-GDP ribazoletransferase, found in Shigella dysenteriae serotype 1 (strain Sd197).